Reading from the N-terminus, the 243-residue chain is Triosephosphate isomerase (243 aa).

Substrate is bound at residue 9-11; sequence NWK. Catalysis depends on H96, which acts as the Electrophile. E165 functions as the Proton acceptor in the catalytic mechanism. Residues G171, S204, and 225–226 contribute to the substrate site; that span reads GG.

It belongs to the triosephosphate isomerase family. Homodimer.

It is found in the cytoplasm. It catalyses the reaction D-glyceraldehyde 3-phosphate = dihydroxyacetone phosphate. It participates in carbohydrate biosynthesis; gluconeogenesis. It functions in the pathway carbohydrate degradation; glycolysis; D-glyceraldehyde 3-phosphate from glycerone phosphate: step 1/1. Its function is as follows. Involved in the gluconeogenesis. Catalyzes stereospecifically the conversion of dihydroxyacetone phosphate (DHAP) to D-glyceraldehyde-3-phosphate (G3P). The chain is Triosephosphate isomerase from Prochlorococcus marinus (strain MIT 9313).